A 199-amino-acid chain; its full sequence is TATA-box-binding protein (199 aa).

Tandem repeats lie at residues 10-86 and 101-177.

This sequence belongs to the TBP family.

In terms of biological role, general factor that plays a role in the activation of archaeal genes transcribed by RNA polymerase. Binds specifically to the TATA box promoter element which lies close to the position of transcription initiation. The polypeptide is TATA-box-binding protein (Pyrobaculum islandicum (strain DSM 4184 / JCM 9189 / GEO3)).